Consider the following 287-residue polypeptide: Large ribosomal subunit protein uL2 (287 aa).

2 disordered regions span residues 1–30 (MGIR…DQPE) and 211–287 (NRWK…GRQS). Residues 12 to 22 (GTRQKSVSDFS) show a composition bias toward polar residues. 2 stretches are compositionally biased toward basic residues: residues 211-220 (NRWKGRRPKV) and 258-287 (KTRK…GRQS).

This sequence belongs to the universal ribosomal protein uL2 family. As to quaternary structure, part of the 50S ribosomal subunit. Forms a bridge to the 30S subunit in the 70S ribosome.

One of the primary rRNA binding proteins. Required for association of the 30S and 50S subunits to form the 70S ribosome, for tRNA binding and peptide bond formation. It has been suggested to have peptidyltransferase activity; this is somewhat controversial. Makes several contacts with the 16S rRNA in the 70S ribosome. This Cyanothece sp. (strain PCC 7425 / ATCC 29141) protein is Large ribosomal subunit protein uL2.